We begin with the raw amino-acid sequence, 163 residues long: MQITYFAGGCFWCVEAIFQRIEGVVKLTSGYCNGNTVDPTYQDICTGTTGHAEVVKVEFYELKVSFKTLLNIFFEIHNPTTKNQQGNDRGTQYRSAIFYTNDEQQSQAIDMVNQMSDKIVTQIIKLDVFYPAENYHQNYFNNNSSQPYCQMLIAPKLNKYFNQ.

The active site involves Cys-10.

The protein belongs to the MsrA Met sulfoxide reductase family.

It carries out the reaction L-methionyl-[protein] + [thioredoxin]-disulfide + H2O = L-methionyl-(S)-S-oxide-[protein] + [thioredoxin]-dithiol. The catalysed reaction is [thioredoxin]-disulfide + L-methionine + H2O = L-methionine (S)-S-oxide + [thioredoxin]-dithiol. Functionally, has an important function as a repair enzyme for proteins that have been inactivated by oxidation. Catalyzes the reversible oxidation-reduction of methionine sulfoxide in proteins to methionine. In Ruthia magnifica subsp. Calyptogena magnifica, this protein is Peptide methionine sulfoxide reductase MsrA.